Consider the following 589-residue polypeptide: Acyl-CoA ligase SID4 (589 aa).

The short motif at 12 to 20 is the PTS2-type peroxisomal targeting signal element; it reads RLQQTLNHI. Residues 228-236, 367-372, D458, and R473 contribute to the ATP site; these read TSGSTGNPK and SSYGLT. T372 contacts substrate. Residues 481 to 483, K547, and 555 to 557 each bind CoA; these read GGE and FGL. Position 572 (K572) interacts with ATP.

Belongs to the ATP-dependent AMP-binding enzyme family.

It is found in the peroxisome. It functions in the pathway siderophore biosynthesis. Its function is as follows. Acyl-CoA ligase; part of the gene cluster that mediates the biosynthesis of hydroxamate-containing siderophores that play a critical role in virulence via intracellular iron acquisition during macrophage infection. The polypeptide is Acyl-CoA ligase SID4 (Ajellomyces capsulatus (Darling's disease fungus)).